The chain runs to 216 residues: ATP-dependent Clp protease proteolytic subunit (216 aa).

Residue serine 101 is the Nucleophile of the active site. The active site involves histidine 126.

This sequence belongs to the peptidase S14 family. Component of the chloroplastic Clp protease core complex.

Its subcellular location is the plastid. The protein localises to the chloroplast stroma. The catalysed reaction is Hydrolysis of proteins to small peptides in the presence of ATP and magnesium. alpha-casein is the usual test substrate. In the absence of ATP, only oligopeptides shorter than five residues are hydrolyzed (such as succinyl-Leu-Tyr-|-NHMec, and Leu-Tyr-Leu-|-Tyr-Trp, in which cleavage of the -Tyr-|-Leu- and -Tyr-|-Trp bonds also occurs).. In terms of biological role, cleaves peptides in various proteins in a process that requires ATP hydrolysis. Has a chymotrypsin-like activity. Plays a major role in the degradation of misfolded proteins. This Oryza nivara (Indian wild rice) protein is ATP-dependent Clp protease proteolytic subunit.